The sequence spans 192 residues: MVSMFWLLATFAYLLGSLSFAILLSRLSGSPDPRASGSGNAGATNMLRLAGKKLAVLTLLGDLCKGLIPVVLAGAWGLDPSQQGWIGVCAVLGHLFPLYFRFRGGKGVATAAGVLLGLYPPAAALAIAAWLLTLYLTRTSSLAALIATPLTLPLLAWQEPHALLPMSVLTLLIVWRHRGNLRDLLAGRERHF.

5 helical membrane passes run 4–24 (MFWLLATFAYLLGSLSFAILL), 54–74 (LAVLTLLGDLCKGLIPVVLAG), 80–100 (PSQQGWIGVCAVLGHLFPLYF), 112–132 (AGVLLGLYPPAAALAIAAWLL), and 154–174 (LLAWQEPHALLPMSVLTLLIV).

This sequence belongs to the PlsY family. In terms of assembly, probably interacts with PlsX.

It is found in the cell inner membrane. It catalyses the reaction an acyl phosphate + sn-glycerol 3-phosphate = a 1-acyl-sn-glycero-3-phosphate + phosphate. Its pathway is lipid metabolism; phospholipid metabolism. In terms of biological role, catalyzes the transfer of an acyl group from acyl-phosphate (acyl-PO(4)) to glycerol-3-phosphate (G3P) to form lysophosphatidic acid (LPA). This enzyme utilizes acyl-phosphate as fatty acyl donor, but not acyl-CoA or acyl-ACP. The sequence is that of Glycerol-3-phosphate acyltransferase from Pseudomonas syringae pv. tomato (strain ATCC BAA-871 / DC3000).